The following is a 572-amino-acid chain: uncharacterized protein (572 aa).

A disordered region spans residues 13–45 (ALIAKPKGKTVSGDGADPKKRGRPKKNATEPAV). Residues 177–204 (VLTKEMEEKLEALDRDMRTAEETKVSIA) adopt a coiled-coil conformation.

This is an uncharacterized protein from Dryophytes versicolor (chameleon treefrog).